The chain runs to 693 residues: Kinesin-like protein KIFC1 (693 aa).

Disordered regions lie at residues 1 to 24 and 48 to 156; these read MRGRGSRDTGTQSAAFASRPVRTT and VKSS…KRPA. Low complexity-rich tracts occupy residues 49–59 and 127–138; these read KSSSRLPLPGS and QKPAPAAPAQKP. S52 and S59 each carry phosphoserine. The stretch at 165 to 334 forms a coiled coil; it reads DLHEELKQYR…QELKGNIRVF (170 aa). In terms of domain architecture, Kinesin motor spans 330–683; it reads NIRVFCRVRP…LRFASKVNQC (354 aa). T379 carries the phosphothreonine modification. Position 430–437 (430–437) interacts with ATP; sequence GQTGSGKT.

The protein belongs to the TRAFAC class myosin-kinesin ATPase superfamily. Kinesin family. NCD subfamily. As to quaternary structure, binds NUBP1 and NUBP2. Interacts with PPP1R42.

The protein localises to the nucleus. It is found in the cytoplasm. It localises to the cytoskeleton. Its subcellular location is the microtubule organizing center. The protein resides in the centrosome. The protein localises to the spindle. It is found in the early endosome. In terms of biological role, minus end-directed microtubule-dependent motor required for bipolar spindle formation. May contribute to movement of early endocytic vesicles. Regulates cilium formation and structure. This is Kinesin-like protein KIFC1 from Rattus norvegicus (Rat).